The chain runs to 259 residues: Transcription factor bHLH80 (259 aa).

Residues 1–25 (MQSTHISGGSSGGGGGGGGEVSRSG) are disordered. The span at 9-20 (GSSGGGGGGGGE) shows a compositional bias: gly residues. One can recognise a bHLH domain in the interval 187 to 237 (CATHPRSIAERVRRTRISDRIRRLQELVPNMDKQTNTADMLEEAVEYVKAL).

As to quaternary structure, homodimer. In terms of tissue distribution, expressed constitutively in roots, leaves, stems, and flowers.

Its subcellular location is the nucleus. The sequence is that of Transcription factor bHLH80 (BHLH80) from Arabidopsis thaliana (Mouse-ear cress).